The primary structure comprises 57 residues: Large ribosomal subunit protein bL32A (57 aa).

It belongs to the bacterial ribosomal protein bL32 family.

The chain is Large ribosomal subunit protein bL32A (rpmF1) from Streptomyces coelicolor (strain ATCC BAA-471 / A3(2) / M145).